Here is a 365-residue protein sequence, read N- to C-terminus: uncharacterized protein (365 aa).

Disordered stretches follow at residues 119-157 (ERSR…QQES), 216-298 (RPPG…DISH), and 313-365 (SHHH…LSVG). The span at 326–340 (SDPRIESRDLPERPQ) shows a compositional bias: basic and acidic residues.

This is an uncharacterized protein from Homo sapiens (Human).